Here is a 590-residue protein sequence, read N- to C-terminus: Vesicular glutamate transporter 3 (590 aa).

At 1 to 76 (MPLGGFAGLK…CGCFGLPKRY (76 aa)) the chain is on the cytoplasmic side. A helical transmembrane segment spans residues 77-97 (IIAMLSGLGFCISFGIRCNLG). The Vesicular portion of the chain corresponds to 98-130 (VAIVEMVNNNTVYINGTAVMQPAQFNWDPETVG). 2 N-linked (GlcNAc...) asparagine glycosylation sites follow: N106 and N112. Residues 131–151 (LIHGSFFWGYIVTQIPGGFIS) form a helical membrane-spanning segment. Topologically, residues 152 to 153 (NK) are cytoplasmic. A helical membrane pass occupies residues 154 to 174 (LAANRVFGAAIFLTSVLNMFI). Topologically, residues 175–182 (PSAARVHY) are vesicular. Residues 183 to 203 (GCVMFVRILQGLVEGVTYPAC) traverse the membrane as a helical segment. Topologically, residues 204–221 (HGMWSKWAPPLERSRLAT) are cytoplasmic. Residues 222–242 (TSFCGSYAGAVIAMPLAGILV) traverse the membrane as a helical segment. At 243 to 249 (QYVGWPS) the chain is on the vesicular side. A helical membrane pass occupies residues 250–270 (VFYIYGVFGIIWYIFWILLAY). Topologically, residues 271–315 (NSPAVHPTISEEERNYIETSIGEGANLMSSTEKFKTPWREFFTSM) are cytoplasmic. A helical transmembrane segment spans residues 316-336 (PVYAIIVANFCRSWTFYLLLI). Residues 337–354 (SQPAYFEEVFGFPISKVG) are Vesicular-facing. A helical transmembrane segment spans residues 355–375 (ILSAVPHMVMTIIVPIGGQLA). At 376-391 (DFLRSRKILSTTTVRK) the chain is on the cytoplasmic side. A helical membrane pass occupies residues 392 to 412 (IMNCGGFGMEATLLLVVGFSH). The Vesicular portion of the chain corresponds to 413–414 (TR). Residues 415–435 (AVAISFLILAVGFSGFAISGF) form a helical membrane-spanning segment. The Cytoplasmic segment spans residues 436–448 (NVNHLDIAPRYAS). The chain crosses the membrane as a helical span at residues 449–469 (ILMGISNGVGTLSGMVCPLIV). At 470–482 (GALTKHKTRLEWQ) the chain is on the vesicular side. The helical transmembrane segment at 483–503 (HVFVIASMVHYTGVIFYAIFA) threads the bilayer. Topologically, residues 504–587 (SGEKQDWADP…NHYENGEYQT (84 aa)) are cytoplasmic. Over residues 526–535 (EDELADETEP) the composition is skewed to acidic residues. The tract at residues 526-590 (EDELADETEP…ENGEYQTQYQ (65 aa)) is disordered. Positions 536–557 (SSDSGLATRQKTYGTTDNSSGR) are enriched in polar residues.

This sequence belongs to the major facilitator superfamily. Sodium/anion cotransporter family. VGLUT subfamily.

The protein resides in the cytoplasmic vesicle. It localises to the secretory vesicle. It is found in the synaptic vesicle membrane. Its subcellular location is the cell membrane. The protein localises to the synapse. The protein resides in the synaptosome. The catalysed reaction is L-glutamate(out) = L-glutamate(in). It catalyses the reaction 3 Na(+)(out) + phosphate(out) = 3 Na(+)(in) + phosphate(in). It carries out the reaction chloride(in) = chloride(out). The L-glutamate uniporter activity exhibits a biphasic dependence on chloride concentration. Chloride channel activity is allosterically activated by lumenal H(+) and Cl(-) leading to synaptic vesicles acidification. The glutamate transport activity is allosterically activated by lumenal H(+) and Cl(-), preventing non-vesicular L-glutamate release. Its function is as follows. Multifunctional transporter that transports L-glutamate as well as multiple ions such as chloride, sodium and phosphate. At the synaptic vesicle membrane, mainly functions as an uniporter that mediates the uptake of L-glutamate into synaptic vesicles at presynaptic nerve terminals of excitatory neural cells. The L-glutamate uniporter activity is electrogenic and is driven by the proton electrochemical gradient, mainly by the electrical gradient established by the vacuolar H(+)-ATPase across the synaptic vesicle membrane. In addition, functions as a chloride channel that allows a chloride permeation through the synaptic vesicle membrane that affects the proton electrochemical gradient and promotes synaptic vesicles acidification. At the plasma membrane, following exocytosis, functions as a symporter of Na(+) and phosphate from the extracellular space to the cytoplasm allowing synaptic phosphate homeostasis regulation. The symporter activity is electrogenic. Moreover, operates synergistically with SLC18A3/VACHT under a constant H(+) gradient, thereby allowing striatal vesicular acetylcholine uptake. This chain is Vesicular glutamate transporter 3, found in Danio rerio (Zebrafish).